The primary structure comprises 553 residues: Zinc finger protein Elbow (553 aa).

Disordered stretches follow at residues 59 to 243 (STKQ…MHSP) and 388 to 407 (GGGGGGSSKSSGSQGGSGGS). 2 stretches are compositionally biased toward low complexity: residues 96-110 (SPVSSHSSSVSTGSV) and 121-134 (SSSSSKPTPTTFKP). Polar residues-rich tracts occupy residues 137-146 (PNNNISNITT), 153-173 (TNLSSNNTSAQQRVKTPKSMT), and 224-236 (TASTTPGRSNSKE). Positions 287–480 (SASAAAAAAS…PDAVLSAAAA (194 aa)) are self-association. The interval 287-553 (SASAAAAAAS…YGPRMGSSHP (267 aa)) is interaction with noc. The segment covering 388–406 (GGGGGGSSKSSGSQGGSGG) has biased composition (gly residues). The C2H2-type zinc finger occupies 437–466 (YVCSWIGSDAAYCGKRFGTSDDLFQHLRTH).

This sequence belongs to the Elbow/Noc family. Self-associates. Interacts with gro and noc.

In terms of biological role, may negatively regulate Notch-induced cell proliferation in the eye-head primordium. May act in leg and wing primordia to negatively regulate body-wall specifying genes and thereby promote appendage formation. Required for tracheal development. The protein is Zinc finger protein Elbow (elB) of Drosophila melanogaster (Fruit fly).